We begin with the raw amino-acid sequence, 588 residues long: L-fucose isomerase (588 aa).

Residues Glu-335 and Asp-359 each act as proton acceptor in the active site. 3 residues coordinate Mn(2+): Glu-335, Asp-359, and His-525.

It belongs to the L-fucose isomerase family. Mn(2+) serves as cofactor.

Its subcellular location is the cytoplasm. It carries out the reaction L-fucose = L-fuculose. The protein operates within carbohydrate degradation; L-fucose degradation; L-lactaldehyde and glycerone phosphate from L-fucose: step 1/3. In terms of biological role, converts the aldose L-fucose into the corresponding ketose L-fuculose. This Streptococcus pneumoniae serotype 2 (strain D39 / NCTC 7466) protein is L-fucose isomerase.